A 101-amino-acid polypeptide reads, in one-letter code: Ascorbate-specific PTS system EIIB component (101 aa).

One can recognise a PTS EIIB type-2 domain in the interval 3-96; the sequence is VRILAVCGNG…KLLEVIKEHF (94 aa). The active-site Phosphocysteine intermediate is Cys9. Cys9 carries the post-translational modification Phosphocysteine.

It localises to the cytoplasm. The catalysed reaction is N(pros)-phospho-L-histidyl-[protein] + L-ascorbate(out) = L-ascorbate 6-phosphate(in) + L-histidyl-[protein]. Its function is as follows. The phosphoenolpyruvate-dependent sugar phosphotransferase system (sugar PTS), a major carbohydrate active transport system, catalyzes the phosphorylation of incoming sugar substrates concomitantly with their translocation across the cell membrane. The enzyme II UlaABC PTS system is involved in ascorbate transport. This is Ascorbate-specific PTS system EIIB component (ulaB) from Salmonella choleraesuis (strain SC-B67).